The sequence spans 150 residues: Regulatory protein RecX (150 aa).

It belongs to the RecX family.

It is found in the cytoplasm. Its function is as follows. Modulates RecA activity. The protein is Regulatory protein RecX of Ectopseudomonas mendocina (strain ymp) (Pseudomonas mendocina).